Reading from the N-terminus, the 72-residue chain is Large ribosomal subunit protein bL28 (72 aa).

It belongs to the bacterial ribosomal protein bL28 family.

The polypeptide is Large ribosomal subunit protein bL28 (Chlorobium phaeobacteroides (strain BS1)).